A 159-amino-acid polypeptide reads, in one-letter code: Fimbrial protein EcpB (159 aa).

The propeptide at 1–6 is leader sequence; that stretch reads MYKQKG. F7 carries the N-methylphenylalanine modification. The chain crosses the membrane as a helical span at residues 7–29; sequence FTLIELMIVIAIIGILAAIALPL. An intrachain disulfide couples C137 to C156.

Belongs to the N-Me-Phe pilin family.

It localises to the fimbrium. Its subcellular location is the membrane. This chain is Fimbrial protein EcpB (ecpB), found in Eikenella corrodens.